A 1392-amino-acid polypeptide reads, in one-letter code: Leucine-rich PPR motif-containing protein, mitochondrial (1392 aa).

Residues 1 to 59 (MAALLRPARWLLGAAAAPRLPLSLRLPAGVPGRLSSVVRVAAVGSRPAAGERLSQARLY) constitute a mitochondrion transit peptide. PPR repeat units lie at residues 125-159 (LLRSCGSLLPELSLAERTEFAHKIWDKLQQLGVVY), 160-194 (DVSHYNALLKVYLQNEYKFSPTDFLAKMEGANIQP), 195-229 (NRVTYQRLIAAYCNVGDIEGASKILGFMKTKDLPI), 230-264 (TEAVFSALVTGHARAGDMENAENILTVMKQAGIEP), 265-299 (GPDTYLALLNAHAERGDIGQVRQILEKVEKSDHYF), 300-334 (MDRDFLQVIFSFSKAGYPQYVSEILEKITYERRSI), 402-436 (HSSSLQFTLHCALQANRTALAKAVMEALREEGFPI), 437-471 (RPHYFWPLLAGHQKTKNVQGIIDILKIMNKVGVDP), 677-708 (VGSALKQLLLLLCSEENMQKALEVKAKYESDM), 709-745 (VIGGYAALINLCCRHDNAEDAWNLKQEVDRLDASAIL), 746-783 (DTAKYVALVKVLGKHSRLQDAINILKEMKEKDVVIKDA), 784-820 (TVLSFFHILNGAALRGEIETVKQLHEAIVTLGLAKPS), 821-856 (SNISFPLVTVHLEKGDLPAALEASIACHKKYKVLPR), and 953-987 (RDQMYYNLLKLYKISSDWQRADAAWTKMQEENIIP). An N6-acetyllysine mark is found at Lys151, Lys186, and Lys225. An N6-acetyllysine modification is found at Lys291. Lys462 is modified (N6-acetyllysine). Lys749 carries the N6-acetyllysine modification. The RNA-binding stretch occupies residues 931–1050 (ASNQVEALEK…NCKLKKSKDA (120 aa)). Phosphoserine is present on residues Ser1025, Ser1026, and Ser1028. 6 PPR repeats span residues 1030-1064 (GEDVTEKTLLSNCKLKKSKDAYNIFLKAEKQNVVF), 1065-1101 (SSETYSTLIGLLLSKDDFTQAMHVKDFAETHIKGFTL), 1102-1136 (NDAANSLLIIRQVRRDYLKGALATLRAALDLKQVP), 1137-1175 (SQIAVTRLIQALALKGDVESIEAIQRMVAGLDTIGLSKM), 1176-1210 (VFINNIALAQMKNNKLDAAIENIEHLLASENQAIE), and 1315-1349 (NDKVYSCSMKSYALDKDVASAKALYEYLTAKNLKL). At Ser1137 the chain carries Phosphoserine.

Component of mRNP complexes associated with HNRPA1. Component of the complex, at least composed of LRPPRC, BECN1 and BCL2; the interactions prevent BECN1 from forming an autophagy-inducing complex with PIK3C3. Interacts with CECR2, HEBP2, MAP1S and UXT. Interacts with PPARGC1A. Interacts with FOXO1. Interacts (via N-terminus) with EIF4E; the interaction promotes association of EIF4E with 4ESE-containing mRNAs. Interacts with exportin XPO1/CRM1; interacts both alone and in complex with EIF4E and 4ESE-containing mRNAs to form an EIF4E-dependent mRNA export complex. Interacts with importin IPO8; the interaction occurs when LRPPRC is in its RNA-free form and returns LRPPRC to the nucleus for further export rounds. Interacts with BECN1. As to expression, strongly expressed in heart, liver and kidney. Weakly expressed in brain, skeletal muscle and testes.

The protein resides in the mitochondrion. Its subcellular location is the nucleus. It is found in the nucleoplasm. It localises to the nucleus inner membrane. The protein localises to the nucleus outer membrane. Its function is as follows. May play a role in RNA metabolism in both nuclei and mitochondria. In the nucleus binds to HNRPA1-associated poly(A) mRNAs and is part of nmRNP complexes at late stages of mRNA maturation which are possibly associated with nuclear mRNA export. Positively modulates nuclear export of mRNAs containing the EIF4E sensitivity element (4ESE) by binding simultaneously to both EIF4E and the 4ESE and acting as a platform for assembly for the RNA export complex. Also binds to exportin XPO1/CRM1 to engage the nuclear pore and traffic the bound mRNAs to the cytoplasm. May bind mature mRNA in the nucleus outer membrane. In mitochondria binds to poly(A) mRNA. Plays a role in translation or stability of mitochondrially encoded cytochrome c oxidase (COX) subunits. May be involved in transcription regulation. Cooperates with PPARGC1A to regulate certain mitochondrially encoded genes and gluconeogenic genes and may regulate docking of PPARGC1A to transcription factors. Seems to be involved in the transcription regulation of the multidrug-related genes MDR1 and MVP. Part of a nuclear factor that binds to the invMED1 element of MDR1 and MVP gene promoters. Binds single-stranded DNA. Required for maintaining mitochondrial potential. Suppresses the initiation of basal levels of autophagy and mitophagy by sustaining BCL2 levels. This chain is Leucine-rich PPR motif-containing protein, mitochondrial (Lrpprc), found in Mus musculus (Mouse).